The chain runs to 142 residues: Large ribosomal subunit protein uL11 (142 aa).

The protein belongs to the universal ribosomal protein uL11 family. As to quaternary structure, part of the ribosomal stalk of the 50S ribosomal subunit. Interacts with L10 and the large rRNA to form the base of the stalk. L10 forms an elongated spine to which L12 dimers bind in a sequential fashion forming a multimeric L10(L12)X complex. One or more lysine residues are methylated.

Functionally, forms part of the ribosomal stalk which helps the ribosome interact with GTP-bound translation factors. The sequence is that of Large ribosomal subunit protein uL11 from Mannheimia succiniciproducens (strain KCTC 0769BP / MBEL55E).